The chain runs to 124 residues: MATINQLVRKPRVKKVVKSNVPALQACPQKRGVCTRVYTTTPKKPNSALRKVCRIRLTNGFEVTSYIGGEGHNLQEHSVVLIRGGRVKDLPGVRYHTVRGALDCAGVKDRKQGRSKYGVKRPKA.

Position 89 is a 3-methylthioaspartic acid (aspartate 89).

This sequence belongs to the universal ribosomal protein uS12 family. In terms of assembly, part of the 30S ribosomal subunit. Contacts proteins S8 and S17. May interact with IF1 in the 30S initiation complex.

In terms of biological role, with S4 and S5 plays an important role in translational accuracy. Functionally, interacts with and stabilizes bases of the 16S rRNA that are involved in tRNA selection in the A site and with the mRNA backbone. Located at the interface of the 30S and 50S subunits, it traverses the body of the 30S subunit contacting proteins on the other side and probably holding the rRNA structure together. The combined cluster of proteins S8, S12 and S17 appears to hold together the shoulder and platform of the 30S subunit. This is Small ribosomal subunit protein uS12 from Mannheimia succiniciproducens (strain KCTC 0769BP / MBEL55E).